Here is a 43-residue protein sequence, read N- to C-terminus: Protein PsbN (43 aa).

A helical membrane pass occupies residues 5–27 (TLVAISISRLLVSFTGYALYTAF).

It belongs to the PsbN family.

The protein resides in the plastid. It is found in the chloroplast thylakoid membrane. Functionally, may play a role in photosystem I and II biogenesis. This Cycas taitungensis (Prince sago) protein is Protein PsbN.